A 486-amino-acid chain; its full sequence is N-succinylglutamate 5-semialdehyde dehydrogenase (486 aa).

221-226 (GSSATG) contacts NAD(+). Catalysis depends on residues E244 and C278.

This sequence belongs to the aldehyde dehydrogenase family. AstD subfamily.

The enzyme catalyses N-succinyl-L-glutamate 5-semialdehyde + NAD(+) + H2O = N-succinyl-L-glutamate + NADH + 2 H(+). It participates in amino-acid degradation; L-arginine degradation via AST pathway; L-glutamate and succinate from L-arginine: step 4/5. Functionally, catalyzes the NAD-dependent reduction of succinylglutamate semialdehyde into succinylglutamate. The chain is N-succinylglutamate 5-semialdehyde dehydrogenase from Chromobacterium violaceum (strain ATCC 12472 / DSM 30191 / JCM 1249 / CCUG 213 / NBRC 12614 / NCIMB 9131 / NCTC 9757 / MK).